Consider the following 142-residue polypeptide: Small ribosomal subunit protein uS12 (142 aa).

The disordered stretch occupies residues Met1–Gln44. The segment covering Ala7 to Gln16 has biased composition (basic residues). Positions Gln17–Pro38 are enriched in basic and acidic residues.

It belongs to the universal ribosomal protein uS12 family. Part of the 30S ribosomal subunit.

Functionally, with S4 and S5 plays an important role in translational accuracy. Located at the interface of the 30S and 50S subunits. The protein is Small ribosomal subunit protein uS12 of Halobacterium salinarum (strain ATCC 29341 / DSM 671 / R1).